The chain runs to 315 residues: Prephenate dehydratase (315 aa).

One can recognise a Prephenate dehydratase domain in the interval 3-189 (RIAYLGPEGT…ARTRFLLIGV (187 aa)). In terms of domain architecture, ACT spans 203–280 (SVVLRIANVP…ADVRYLGSWP (78 aa)).

Homodimer.

The enzyme catalyses prephenate + H(+) = 3-phenylpyruvate + CO2 + H2O. Its pathway is amino-acid biosynthesis; L-phenylalanine biosynthesis; phenylpyruvate from prephenate: step 1/1. The protein is Prephenate dehydratase (pheA) of Mycobacterium marinum (strain ATCC BAA-535 / M).